We begin with the raw amino-acid sequence, 406 residues long: MSTTAHTEPSWADLPFLDFTDPNFSWDSPEVAEAREKSWIARTPLALLVLRYAEADQLARDKRLISGFRGLVDMVGTPEGPVRDFMVDFLQSLDGADHRRLRGLATHPFTPRRITAVQPFVRSTVEQLIDKLPQGDFDFVQHFPHPLPALVMCQLLGFPLEDYDTVGRLSIETNLGLALSNDQDILVKVEQGLGRMFDYLVAAIEKRKVEPGDDLTSDIVRAFHDGVLDDYELRTLVATVLVAGYETTNHQLALAMYDFAQHPDQWMKIKENPELAPQAVEEVLRWSPTLPVTATRVAAEDFEVNGVRIPTGTPVFMCAHVAHRDPRVFADADRFDITVKREAPSIAFGGGPHFCLGTALARLELTEAVAALATRLDPPQIAGEITWRHELGVAGPDALPLRFGAA.

Heme b-binding residues include His-98, Arg-102, Arg-296, Gly-350, His-353, and Cys-355.

This sequence belongs to the cytochrome P450 family. As to quaternary structure, monomer. It depends on heme b as a cofactor.

The catalysed reaction is luteothin + 4 reduced [2Fe-2S]-[ferredoxin] + 2 O2 + 4 H(+) = aureothin + 4 oxidized [2Fe-2S]-[ferredoxin] + 3 H2O. It participates in antibiotic biosynthesis. The protein operates within polyketide biosynthesis. Bifunctional cytochrome P450 protein involved in the biosynthesis of the antibiotic aureothin, a nitroaryl polyketide metabolite with antifungal, cytotoxic and insecticidal activities. Catalyzes the hydroxylation of luteothin (also called deoxyaureothin), leading to the formation of the intermediate (7R)-7-hydroxydeoxyaureothin, followed by the formation of the aureothin tetrahydrofuran ring, the final step in the biosynthesis of aureothin. This is Luteothin monooxygenase from Streptomyces thioluteus.